Here is a 350-residue protein sequence, read N- to C-terminus: Alcohol dehydrogenase 1 (350 aa).

Zn(2+) contacts are provided by Cys-44, Thr-46, His-67, Cys-98, Cys-101, Cys-104, Cys-112, and Cys-154. Positions 46 and 67 each coordinate an alcohol. Thr-46 contacts NAD(+). Residues 178-182 (GAGGG), Asp-202, Lys-207, 271-273 (IGL), and Arg-343 contribute to the NAD(+) site.

Belongs to the zinc-containing alcohol dehydrogenase family. As to quaternary structure, homotetramer. Zn(2+) serves as cofactor.

The protein localises to the cytoplasm. Its subcellular location is the secreted. It catalyses the reaction a primary alcohol + NAD(+) = an aldehyde + NADH + H(+). It carries out the reaction a secondary alcohol + NAD(+) = a ketone + NADH + H(+). The sequence is that of Alcohol dehydrogenase 1 (alcA) from Emericella nidulans (strain FGSC A4 / ATCC 38163 / CBS 112.46 / NRRL 194 / M139) (Aspergillus nidulans).